The chain runs to 292 residues: Beta-lactamase-like protein 2 homolog (292 aa).

Residues His-76, His-78, Asp-80, His-81, His-145, Asp-163, and His-198 each coordinate Zn(2+).

Belongs to the metallo-beta-lactamase superfamily. Glyoxalase II family.

The polypeptide is Beta-lactamase-like protein 2 homolog (Drosophila melanogaster (Fruit fly)).